A 453-amino-acid polypeptide reads, in one-letter code: Trypanin (453 aa).

Basic and acidic residues predominate over residues 1-10 (MPPRTAAERG). The disordered stretch occupies residues 1-22 (MPPRTAAERGGRRKSVKAPPPV). Coiled-coil stretches lie at residues 60 to 156 (TITK…EMNV) and 185 to 377 (SCEA…LVEE).

This sequence belongs to the DRC4 family.

It is found in the cytoplasm. The protein localises to the cytoskeleton. Its subcellular location is the cell projection. The protein resides in the cilium. It localises to the flagellum. In terms of biological role, cytoskeletal linker that plays a central role in the flagellum cell motility. Required for directional cell motility. Plays a role as part of a dynein regulatory system that regulates flagellar beat in response to signals from the central pair apparatus and radial spokes in procyclic cells. Also plays an essential role in the bloodstream form of the trypanosomes as its silencing is lethal for the circulating form. The polypeptide is Trypanin (Trypanosoma brucei rhodesiense).